The chain runs to 932 residues: Glycine dehydrogenase (decarboxylating) (932 aa).

N6-(pyridoxal phosphate)lysine is present on Lys-685.

It belongs to the GcvP family. The glycine cleavage system is composed of four proteins: P, T, L and H. The cofactor is pyridoxal 5'-phosphate.

The enzyme catalyses N(6)-[(R)-lipoyl]-L-lysyl-[glycine-cleavage complex H protein] + glycine + H(+) = N(6)-[(R)-S(8)-aminomethyldihydrolipoyl]-L-lysyl-[glycine-cleavage complex H protein] + CO2. The glycine cleavage system catalyzes the degradation of glycine. The P protein binds the alpha-amino group of glycine through its pyridoxal phosphate cofactor; CO(2) is released and the remaining methylamine moiety is then transferred to the lipoamide cofactor of the H protein. The chain is Glycine dehydrogenase (decarboxylating) from Brucella suis biovar 1 (strain 1330).